Here is an 80-residue protein sequence, read N- to C-terminus: Defensin-like protein 51 (80 aa).

Residues 1–27 (MGFTKILVTFFLVGLLVISSSPQNAIA) form the signal peptide. Disulfide bonds link Cys-39–Cys-79, Cys-43–Cys-66, Cys-52–Cys-77, and Cys-56–Cys-78.

Belongs to the DEFL family.

The protein localises to the secreted. This chain is Defensin-like protein 51 (LCR48), found in Arabidopsis thaliana (Mouse-ear cress).